Consider the following 651-residue polypeptide: Protein transport protein SEC9 (651 aa).

3 disordered regions span residues 1-22 (MGLKKFFKIKPPEEATPEQNKD), 53-299 (AEDK…QAPM), and 313-332 (RNSEVDLNEEPRTGEFDFEE). A phosphoserine mark is found at S79 and S92. Residues 86–112 (NEATAGSNRGSSGTQDLGNGAESNSMQ) are compositionally biased toward polar residues. Basic and acidic residues predominate over residues 120–129 (DDYRYDDDPY). Polar residues-rich tracts occupy residues 157–218 (GTSL…SLDQ) and 244–284 (DSNT…ANPY). S186, S190, S213, S271, and S273 each carry phosphoserine. Positions 285-296 (SSRSVRQPQSQQ) are enriched in low complexity. Residues 313–327 (RNSEVDLNEEPRTGE) show a composition bias toward basic and acidic residues. S315 carries the phosphoserine modification. T355 carries the phosphothreonine modification. Residue S359 is modified to Phosphoserine. 2 consecutive t-SNARE coiled-coil homology domains span residues 434–496 (KFTK…VAEL) and 588–650 (DEME…LAGI).

The protein belongs to the SNAP-25 family. In terms of assembly, interacts with SRO7 and SRO77.

Functionally, component of a SNARE complex that may be the effector of SEC4 function in exocytosis. The sequence is that of Protein transport protein SEC9 (SEC9) from Saccharomyces cerevisiae (strain ATCC 204508 / S288c) (Baker's yeast).